Here is a 177-residue protein sequence, read N- to C-terminus: ATP synthase subunit delta (177 aa).

It belongs to the ATPase delta chain family. F-type ATPases have 2 components, F(1) - the catalytic core - and F(0) - the membrane proton channel. F(1) has five subunits: alpha(3), beta(3), gamma(1), delta(1), epsilon(1). F(0) has three main subunits: a(1), b(2) and c(10-14). The alpha and beta chains form an alternating ring which encloses part of the gamma chain. F(1) is attached to F(0) by a central stalk formed by the gamma and epsilon chains, while a peripheral stalk is formed by the delta and b chains.

The protein resides in the cell membrane. Its function is as follows. F(1)F(0) ATP synthase produces ATP from ADP in the presence of a proton or sodium gradient. F-type ATPases consist of two structural domains, F(1) containing the extramembraneous catalytic core and F(0) containing the membrane proton channel, linked together by a central stalk and a peripheral stalk. During catalysis, ATP synthesis in the catalytic domain of F(1) is coupled via a rotary mechanism of the central stalk subunits to proton translocation. In terms of biological role, this protein is part of the stalk that links CF(0) to CF(1). It either transmits conformational changes from CF(0) to CF(1) or is implicated in proton conduction. This Streptococcus suis (strain 98HAH33) protein is ATP synthase subunit delta.